Reading from the N-terminus, the 533-residue chain is 2-succinyl-5-enolpyruvyl-6-hydroxy-3-cyclohexene-1-carboxylate synthase (533 aa).

The protein belongs to the TPP enzyme family. MenD subfamily. In terms of assembly, homodimer. It depends on Mg(2+) as a cofactor. Mn(2+) serves as cofactor. The cofactor is thiamine diphosphate.

The enzyme catalyses isochorismate + 2-oxoglutarate + H(+) = 5-enolpyruvoyl-6-hydroxy-2-succinyl-cyclohex-3-ene-1-carboxylate + CO2. It functions in the pathway quinol/quinone metabolism; 1,4-dihydroxy-2-naphthoate biosynthesis; 1,4-dihydroxy-2-naphthoate from chorismate: step 2/7. It participates in quinol/quinone metabolism; menaquinone biosynthesis. In terms of biological role, catalyzes the thiamine diphosphate-dependent decarboxylation of 2-oxoglutarate and the subsequent addition of the resulting succinic semialdehyde-thiamine pyrophosphate anion to isochorismate to yield 2-succinyl-5-enolpyruvyl-6-hydroxy-3-cyclohexene-1-carboxylate (SEPHCHC). The protein is 2-succinyl-5-enolpyruvyl-6-hydroxy-3-cyclohexene-1-carboxylate synthase of Akkermansia muciniphila (strain ATCC BAA-835 / DSM 22959 / JCM 33894 / BCRC 81048 / CCUG 64013 / CIP 107961 / Muc).